A 93-amino-acid polypeptide reads, in one-letter code: Small ribosomal subunit protein bS16 (93 aa).

This sequence belongs to the bacterial ribosomal protein bS16 family.

In Opitutus terrae (strain DSM 11246 / JCM 15787 / PB90-1), this protein is Small ribosomal subunit protein bS16.